The sequence spans 436 residues: UDP-N-acetylmuramate--L-alanine ligase (436 aa).

Residue 110–116 (GAHGKTS) participates in ATP binding.

This sequence belongs to the MurCDEF family.

It is found in the cytoplasm. It carries out the reaction UDP-N-acetyl-alpha-D-muramate + L-alanine + ATP = UDP-N-acetyl-alpha-D-muramoyl-L-alanine + ADP + phosphate + H(+). Its pathway is cell wall biogenesis; peptidoglycan biosynthesis. Its function is as follows. Cell wall formation. The chain is UDP-N-acetylmuramate--L-alanine ligase from Lacticaseibacillus paracasei (strain ATCC 334 / BCRC 17002 / CCUG 31169 / CIP 107868 / KCTC 3260 / NRRL B-441) (Lactobacillus paracasei).